The sequence spans 78 residues: Sec-independent protein translocase protein TatA (78 aa).

Residues 1–21 (MGSLSIWHWIVVIGVVLLLFG) form a helical membrane-spanning segment. Residues 42–60 (GLQDDEKTAEKPEPVKSID) are compositionally biased toward basic and acidic residues. The tract at residues 42–78 (GLQDDEKTAEKPEPVKSIDHTAPPAAAPRTDVGSKVV) is disordered.

Belongs to the TatA/E family. In terms of assembly, the Tat system comprises two distinct complexes: a TatABC complex, containing multiple copies of TatA, TatB and TatC subunits, and a separate TatA complex, containing only TatA subunits. Substrates initially bind to the TatABC complex, which probably triggers association of the separate TatA complex to form the active translocon.

It is found in the cell inner membrane. In terms of biological role, part of the twin-arginine translocation (Tat) system that transports large folded proteins containing a characteristic twin-arginine motif in their signal peptide across membranes. TatA could form the protein-conducting channel of the Tat system. This Rhodopseudomonas palustris (strain BisB18) protein is Sec-independent protein translocase protein TatA.